Reading from the N-terminus, the 181-residue chain is Anthrone oxygenase encC (181 aa).

The next 4 helical transmembrane spans lie at 1–21 (MASV…WLSG), 65–81 (QIAA…AWCA), 88–108 (LLYG…LLFM), and 153–173 (FLAG…LFAA).

Belongs to the anthrone oxygenase family. As to expression, endocrocin is specifically produced in conidia.

Its subcellular location is the membrane. Its function is as follows. Anthrone oxygenase; part of the gene cluster that mediates the biosynthesis of endocrocin, a simple anthraquinone interesting for many biotechnological applications. The pathway begins with the synthesis of atrochrysone thioester by the polyketide synthase (PKS) encA. The atrochrysone carboxyl ACP thioesterase encB then breaks the thioester bond and releases the atrochrysone carboxylic acid from encA. The atrochrysone carboxylic acid is then converted to endocrocin anthrone which is further oxidized into endocrocin by the anthrone oxygenase encC. The exact function of encD has not been identified yet, but it negatively regulates endocrocin production, likely through the modification of endocrocin itself. This is Anthrone oxygenase encC from Aspergillus fumigatus (strain ATCC MYA-4609 / CBS 101355 / FGSC A1100 / Af293) (Neosartorya fumigata).